The following is a 339-amino-acid chain: tRNA N6-adenosine threonylcarbamoyltransferase (339 aa).

Residues histidine 111 and histidine 115 each coordinate Fe cation. Substrate contacts are provided by residues 134-138 (LVSGG), aspartate 167, glycine 180, and asparagine 272. Residue aspartate 300 participates in Fe cation binding.

It belongs to the KAE1 / TsaD family. It depends on Fe(2+) as a cofactor.

Its subcellular location is the cytoplasm. The catalysed reaction is L-threonylcarbamoyladenylate + adenosine(37) in tRNA = N(6)-L-threonylcarbamoyladenosine(37) in tRNA + AMP + H(+). Its function is as follows. Required for the formation of a threonylcarbamoyl group on adenosine at position 37 (t(6)A37) in tRNAs that read codons beginning with adenine. Is involved in the transfer of the threonylcarbamoyl moiety of threonylcarbamoyl-AMP (TC-AMP) to the N6 group of A37, together with TsaE and TsaB. TsaD likely plays a direct catalytic role in this reaction. The protein is tRNA N6-adenosine threonylcarbamoyltransferase of Vibrio vulnificus (strain YJ016).